A 334-amino-acid chain; its full sequence is D-alanine--D-alanine ligase (334 aa).

The ATP-grasp domain occupies Lys121–Thr327. Ala151–Glu206 serves as a coordination point for ATP. 3 residues coordinate Mg(2+): Asp281, Glu294, and Asn296.

This sequence belongs to the D-alanine--D-alanine ligase family. The cofactor is Mg(2+). Mn(2+) serves as cofactor.

It is found in the cytoplasm. The enzyme catalyses 2 D-alanine + ATP = D-alanyl-D-alanine + ADP + phosphate + H(+). The protein operates within cell wall biogenesis; peptidoglycan biosynthesis. Its function is as follows. Cell wall formation. The polypeptide is D-alanine--D-alanine ligase (Vibrio cholerae serotype O1 (strain ATCC 39315 / El Tor Inaba N16961)).